We begin with the raw amino-acid sequence, 143 residues long: Transcriptional regulator MraZ (143 aa).

SpoVT-AbrB domains lie at Thr-5 to Glu-47 and Ala-76 to Thr-119.

This sequence belongs to the MraZ family. In terms of assembly, forms oligomers.

Its subcellular location is the cytoplasm. The protein resides in the nucleoid. The chain is Transcriptional regulator MraZ from Thermobifida fusca (strain YX).